We begin with the raw amino-acid sequence, 220 residues long: Large ribosomal subunit protein uL3 (220 aa).

Positions 126–158 are disordered; sequence GFQGAIKRHGQSRGPMSHGSRYHRRPGSMGMAS.

This sequence belongs to the universal ribosomal protein uL3 family. As to quaternary structure, part of the 50S ribosomal subunit. Forms a cluster with proteins L14 and L19.

Functionally, one of the primary rRNA binding proteins, it binds directly near the 3'-end of the 23S rRNA, where it nucleates assembly of the 50S subunit. This chain is Large ribosomal subunit protein uL3, found in Macrococcus caseolyticus (strain JCSC5402) (Macrococcoides caseolyticum).